A 148-amino-acid chain; its full sequence is Ubiquitin-conjugating enzyme E2-16 kDa (148 aa).

In terms of domain architecture, UBC core spans Ser2–Val148. Ser12 is subject to Phosphoserine. The Glycyl thioester intermediate role is filled by Cys86. A Glycyl lysine isopeptide (Lys-Gly) (interchain with G-Cter in ubiquitin) cross-link involves residue Lys91.

The protein belongs to the ubiquitin-conjugating enzyme family. As to quaternary structure, component of the RSP5-UBA1-UBC5 ubiquitin ligase complex composed of E3 RSP5, E1 UBA1 and E2 UBC5. In terms of processing, the N-terminus is blocked.

The catalysed reaction is S-ubiquitinyl-[E1 ubiquitin-activating enzyme]-L-cysteine + [E2 ubiquitin-conjugating enzyme]-L-cysteine = [E1 ubiquitin-activating enzyme]-L-cysteine + S-ubiquitinyl-[E2 ubiquitin-conjugating enzyme]-L-cysteine.. It participates in protein modification; protein ubiquitination. Its function is as follows. Catalyzes the covalent attachment of ubiquitin to other proteins. Mediates the selective degradation of short-lived and abnormal proteins. The RSP5-UBA1-UBC5 ubiquitin ligase complex ubiquitinates RPO21 forming 'Lys-63'-linked polyubiquitin chains. In Saccharomyces cerevisiae (strain ATCC 204508 / S288c) (Baker's yeast), this protein is Ubiquitin-conjugating enzyme E2-16 kDa (UBC5).